The primary structure comprises 342 residues: tRNA N6-adenosine threonylcarbamoyltransferase (342 aa).

Positions 111 and 115 each coordinate Fe cation. Substrate is bound by residues 134 to 138 (LVSGG), Asp167, Gly180, and Asn277. Residue Asp305 participates in Fe cation binding.

The protein belongs to the KAE1 / TsaD family. Fe(2+) is required as a cofactor.

The protein resides in the cytoplasm. The catalysed reaction is L-threonylcarbamoyladenylate + adenosine(37) in tRNA = N(6)-L-threonylcarbamoyladenosine(37) in tRNA + AMP + H(+). In terms of biological role, required for the formation of a threonylcarbamoyl group on adenosine at position 37 (t(6)A37) in tRNAs that read codons beginning with adenine. Is involved in the transfer of the threonylcarbamoyl moiety of threonylcarbamoyl-AMP (TC-AMP) to the N6 group of A37, together with TsaE and TsaB. TsaD likely plays a direct catalytic role in this reaction. This chain is tRNA N6-adenosine threonylcarbamoyltransferase, found in Histophilus somni (strain 2336) (Haemophilus somnus).